The chain runs to 171 residues: Odorant-binding protein 1b (171 aa).

A signal peptide spans 1–19 (MMVKFLLLALVFGLAHVHA). Intrachain disulfides connect cysteine 57/cysteine 61 and cysteine 76/cysteine 169.

It belongs to the calycin superfamily. Lipocalin family. In terms of assembly, may form a heterodimer with OBP1A. The N-terminus may be blocked. Expressed in nasal mucosa (at protein level). Specifically detected in septal and lateral nasal glands.

The protein resides in the secreted. Functionally, binds the chemical odorant 2-isobutyl-3-methoxypyrazine. The protein is Odorant-binding protein 1b of Mus musculus (Mouse).